We begin with the raw amino-acid sequence, 62 residues long: Translational regulator CsrA (62 aa).

This sequence belongs to the CsrA/RsmA family. In terms of assembly, homodimer; the beta-strands of each monomer intercalate to form a hydrophobic core, while the alpha-helices form wings that extend away from the core.

It is found in the cytoplasm. In terms of biological role, a key translational regulator that binds mRNA to regulate translation initiation and/or mRNA stability. Mediates global changes in gene expression, shifting from rapid growth to stress survival by linking envelope stress, the stringent response and the catabolite repression systems. Usually binds in the 5'-UTR; binding at or near the Shine-Dalgarno sequence prevents ribosome-binding, repressing translation, binding elsewhere in the 5'-UTR can activate translation and/or stabilize the mRNA. Its function is antagonized by small RNA(s). The sequence is that of Translational regulator CsrA from Idiomarina loihiensis (strain ATCC BAA-735 / DSM 15497 / L2-TR).